We begin with the raw amino-acid sequence, 548 residues long: MKKATKLLLSILPISSISFLSVVSCSTRNSNAKQPDKKPEKPNEKGPIIPKNPDNKKPTNNNNNSNNNSNSNNNKPGSTVPNENKDPSKSEETPEKPERDPKKPDKQPQGDDPNNHQPHNNQHADQPNINKDEFADLDKLPKEISFERFDFYTSKDATTALSHLRTDGSVIKIIFSNTHRNIFGKYNINLELDGNEKEDVKKGLIDKVKVKFTNKKDKKSKIIEFTFTGFKVIQKSPDKENKNSKKNYIKKKEKIDNKLTGLYPSLVAYMIMYTQEPKNYKNLMQKDSINFEELENNNPNLFADPEINLNVVALKDLLLEYNRELGKLYKDKVIAVSYDDVNGKLGLKLLIENREENDTIASKYSETLEFDFVGFRKIDLKNPNKNVLSLLFPQNNFKDMIKNNVFKKKIEVLKSGKQKEDMVLVKEEYAKQLIFKNLLVQIIDNENNLYRSTQTLSLQNNKKDNYTSILGLAGGGTLYPFHTIINNNSIKNIYLMINKEKNKKYKVAINFEVDIPIFASTTSDLTFHATSGDTNILKLDITTNALID.

A signal peptide spans 1 to 24 (MKKATKLLLSILPISSISFLSVVS). Cys-25 carries the N-palmitoyl cysteine lipid modification. Cys-25 is lipidated: S-diacylglycerol cysteine. The tract at residues 26–129 (STRNSNAKQP…NNQHADQPNI (104 aa)) is disordered. Basic and acidic residues predominate over residues 34–44 (QPDKKPEKPNE). The segment covering 58-78 (PTNNNNNSNNNSNSNNNKPGS) has biased composition (low complexity). Positions 83 to 109 (ENKDPSKSEETPEKPERDPKKPDKQPQ) are enriched in basic and acidic residues. Positions 110 to 128 (GDDPNNHQPHNNQHADQPN) are enriched in low complexity.

This sequence belongs to the mycoplasma p72 lipoprotein family.

Its subcellular location is the cell membrane. This is an uncharacterized protein from Mycoplasma mycoides subsp. mycoides SC (strain CCUG 32753 / NCTC 10114 / PG1).